A 164-amino-acid chain; its full sequence is Transcriptional regulator MraZ (164 aa).

2 SpoVT-AbrB domains span residues 7–57 (THQN…TVGA) and 86–129 (AYPL…NPEA). Positions 133–164 (RRQAARSRARTLATSRRPASAPAAGNTAGAAE) are disordered. Residues 142–164 (RTLATSRRPASAPAAGNTAGAAE) are compositionally biased toward low complexity.

The protein belongs to the MraZ family. Forms oligomers.

It is found in the cytoplasm. Its subcellular location is the nucleoid. This Gluconobacter oxydans (strain 621H) (Gluconobacter suboxydans) protein is Transcriptional regulator MraZ.